A 268-amino-acid chain; its full sequence is Small ribosomal subunit protein uS2 (268 aa).

Residues 228–268 form a disordered region; the sequence is QLDSEQDYEDFDESISDEYDDYEDEEEYEEQDLEVDASEDE. Positions 231-268 are enriched in acidic residues; that stretch reads SEQDYEDFDESISDEYDDYEDEEEYEEQDLEVDASEDE.

This sequence belongs to the universal ribosomal protein uS2 family.

This Rippkaea orientalis (strain PCC 8801 / RF-1) (Cyanothece sp. (strain PCC 8801)) protein is Small ribosomal subunit protein uS2.